The chain runs to 896 residues: Alanine--tRNA ligase (896 aa).

Zn(2+) contacts are provided by His-599, His-603, Cys-707, and His-711.

It belongs to the class-II aminoacyl-tRNA synthetase family. Requires Zn(2+) as cofactor.

It is found in the cytoplasm. The catalysed reaction is tRNA(Ala) + L-alanine + ATP = L-alanyl-tRNA(Ala) + AMP + diphosphate. In terms of biological role, catalyzes the attachment of alanine to tRNA(Ala) in a two-step reaction: alanine is first activated by ATP to form Ala-AMP and then transferred to the acceptor end of tRNA(Ala). Also edits incorrectly charged Ser-tRNA(Ala) and Gly-tRNA(Ala) via its editing domain. The sequence is that of Alanine--tRNA ligase from Pyrobaculum calidifontis (strain DSM 21063 / JCM 11548 / VA1).